The primary structure comprises 338 residues: S-adenosylmethionine:tRNA ribosyltransferase-isomerase (338 aa).

The protein belongs to the QueA family. Monomer.

The protein localises to the cytoplasm. It carries out the reaction 7-aminomethyl-7-carbaguanosine(34) in tRNA + S-adenosyl-L-methionine = epoxyqueuosine(34) in tRNA + adenine + L-methionine + 2 H(+). Its pathway is tRNA modification; tRNA-queuosine biosynthesis. Functionally, transfers and isomerizes the ribose moiety from AdoMet to the 7-aminomethyl group of 7-deazaguanine (preQ1-tRNA) to give epoxyqueuosine (oQ-tRNA). This chain is S-adenosylmethionine:tRNA ribosyltransferase-isomerase, found in Francisella philomiragia subsp. philomiragia (strain ATCC 25017 / CCUG 19701 / FSC 153 / O#319-036).